Reading from the N-terminus, the 271-residue chain is ATP synthase subunit a (271 aa).

5 consecutive transmembrane segments (helical) span residues 40–60, 100–120, 146–166, 220–240, and 242–262; these read TINI…LVLF, LIAP…LMDL, DVNV…FYSI, LIFI…LNVP, and AIFH…LTIV.

This sequence belongs to the ATPase A chain family. In terms of assembly, F-type ATPases have 2 components, CF(1) - the catalytic core - and CF(0) - the membrane proton channel. CF(1) has five subunits: alpha(3), beta(3), gamma(1), delta(1), epsilon(1). CF(0) has three main subunits: a(1), b(2) and c(9-12). The alpha and beta chains form an alternating ring which encloses part of the gamma chain. CF(1) is attached to CF(0) by a central stalk formed by the gamma and epsilon chains, while a peripheral stalk is formed by the delta and b chains.

It is found in the cell inner membrane. Functionally, key component of the proton channel; it plays a direct role in the translocation of protons across the membrane. In Escherichia coli O8 (strain IAI1), this protein is ATP synthase subunit a.